Here is a 469-residue protein sequence, read N- to C-terminus: Bifunctional protein GlmU (469 aa).

A pyrophosphorylase region spans residues 1–236 (MLNIKLNIVI…ISEINGINDC (236 aa)). Residues 11 to 14 (LAAG), K25, Q83, 88 to 89 (GT), 110 to 112 (YGD), G147, E161, N176, and N234 contribute to the UDP-N-acetyl-alpha-D-glucosamine site. D112 contributes to the Mg(2+) binding site. Position 234 (N234) interacts with Mg(2+). Residues 237 to 257 (AQLANLERLYQKEQAESLLRI) are linker. The N-acetyltransferase stretch occupies residues 258–469 (GVIIADPNRF…KKKIRYNIIY (212 aa)). 2 residues coordinate UDP-N-acetyl-alpha-D-glucosamine: R340 and K358. The active-site Proton acceptor is the H370. UDP-N-acetyl-alpha-D-glucosamine is bound by residues Y373 and N384. Acetyl-CoA-binding positions include A387, 393–394 (NY), S412, A430, and R447.

This sequence in the N-terminal section; belongs to the N-acetylglucosamine-1-phosphate uridyltransferase family. It in the C-terminal section; belongs to the transferase hexapeptide repeat family. Homotrimer. Requires Mg(2+) as cofactor.

The protein resides in the cytoplasm. It catalyses the reaction alpha-D-glucosamine 1-phosphate + acetyl-CoA = N-acetyl-alpha-D-glucosamine 1-phosphate + CoA + H(+). The enzyme catalyses N-acetyl-alpha-D-glucosamine 1-phosphate + UTP + H(+) = UDP-N-acetyl-alpha-D-glucosamine + diphosphate. It participates in nucleotide-sugar biosynthesis; UDP-N-acetyl-alpha-D-glucosamine biosynthesis; N-acetyl-alpha-D-glucosamine 1-phosphate from alpha-D-glucosamine 6-phosphate (route II): step 2/2. It functions in the pathway nucleotide-sugar biosynthesis; UDP-N-acetyl-alpha-D-glucosamine biosynthesis; UDP-N-acetyl-alpha-D-glucosamine from N-acetyl-alpha-D-glucosamine 1-phosphate: step 1/1. The protein operates within bacterial outer membrane biogenesis; LPS lipid A biosynthesis. Its function is as follows. Catalyzes the last two sequential reactions in the de novo biosynthetic pathway for UDP-N-acetylglucosamine (UDP-GlcNAc). The C-terminal domain catalyzes the transfer of acetyl group from acetyl coenzyme A to glucosamine-1-phosphate (GlcN-1-P) to produce N-acetylglucosamine-1-phosphate (GlcNAc-1-P), which is converted into UDP-GlcNAc by the transfer of uridine 5-monophosphate (from uridine 5-triphosphate), a reaction catalyzed by the N-terminal domain. This is Bifunctional protein GlmU from Baumannia cicadellinicola subsp. Homalodisca coagulata.